We begin with the raw amino-acid sequence, 261 residues long: uncharacterized protein (261 aa).

Positions 16–147 (KQTSLVLQNL…QTNVNVLRSQ (132 aa)) form a coiled coil.

The protein resides in the cytoplasm. This is an uncharacterized protein from Schizosaccharomyces pombe (strain 972 / ATCC 24843) (Fission yeast).